The following is a 512-amino-acid chain: Phospho-2-dehydro-3-deoxyheptonate aldolase 2, chloroplastic (512 aa).

The transit peptide at 1–57 (MALTATATTRGGSALPNSCLQTPKFQSLQKPTFISSFPTNKKTKPRTKHISAVQSPP) directs the protein to the chloroplast. The interval 37–57 (FPTNKKTKPRTKHISAVQSPP) is disordered. Position 126 (Cys126) interacts with Mn(2+). Residues Arg165, 324-325 (ER), Lys347, and Arg378 contribute to the substrate site. Mn(2+) contacts are provided by His410, Glu452, and Asp482.

It belongs to the class-II DAHP synthase family. In terms of assembly, homodimer. It depends on Mn(2+) as a cofactor. As to expression, mostly expressed in leaves and stems, and, to a lower extent, in roots, stigmas, anthers, petal tubes, petal limbs and sepals.

The protein resides in the plastid. Its subcellular location is the chloroplast. It catalyses the reaction D-erythrose 4-phosphate + phosphoenolpyruvate + H2O = 7-phospho-2-dehydro-3-deoxy-D-arabino-heptonate + phosphate. It participates in metabolic intermediate biosynthesis; chorismate biosynthesis; chorismate from D-erythrose 4-phosphate and phosphoenolpyruvate: step 1/7. Its function is as follows. Involved in the production of volatile organic compounds (VOCs). Catalyzes an aldol-like condensation reaction between phosphoenolpyruvate (PEP) and D-erythrose 4-phosphate (E4P) to generate 3-deoxy-D-arabino-heptulosonate 7-phosphate (DAH7P) and inorganic phosphate. The polypeptide is Phospho-2-dehydro-3-deoxyheptonate aldolase 2, chloroplastic (Petunia hybrida (Petunia)).